The primary structure comprises 429 residues: Adenosylhomocysteinase (429 aa).

3 residues coordinate substrate: Thr64, Asp136, and Glu161. Residue 162 to 164 (TTT) coordinates NAD(+). The substrate site is built by Lys191 and Asp195. NAD(+) contacts are provided by residues Asn196, 225 to 230 (GYGWCG), Glu248, Asn283, 304 to 306 (SGH), and Asn351.

It belongs to the adenosylhomocysteinase family. The cofactor is NAD(+).

It is found in the cytoplasm. The catalysed reaction is S-adenosyl-L-homocysteine + H2O = L-homocysteine + adenosine. It functions in the pathway amino-acid biosynthesis; L-homocysteine biosynthesis; L-homocysteine from S-adenosyl-L-homocysteine: step 1/1. Functionally, may play a key role in the regulation of the intracellular concentration of adenosylhomocysteine. The sequence is that of Adenosylhomocysteinase from Thermosynechococcus vestitus (strain NIES-2133 / IAM M-273 / BP-1).